The following is an 801-amino-acid chain: Phenylalanine--tRNA ligase beta subunit (801 aa).

The region spanning 39–152 (ARAFSGVVVG…TDAPIGTDIR (114 aa)) is the tRNA-binding domain. The 76-residue stretch at 407–482 (PARAPITLPI…RIYGYDNIPS (76 aa)) folds into the B5 domain. Mg(2+) contacts are provided by aspartate 460, aspartate 466, glutamate 469, and glutamate 470. In terms of domain architecture, FDX-ACB spans 706-799 (SKFPQVRRDI…LTVEHSAQLR (94 aa)).

It belongs to the phenylalanyl-tRNA synthetase beta subunit family. Type 1 subfamily. As to quaternary structure, tetramer of two alpha and two beta subunits. The cofactor is Mg(2+).

It is found in the cytoplasm. It catalyses the reaction tRNA(Phe) + L-phenylalanine + ATP = L-phenylalanyl-tRNA(Phe) + AMP + diphosphate + H(+). The polypeptide is Phenylalanine--tRNA ligase beta subunit (Psychrobacter arcticus (strain DSM 17307 / VKM B-2377 / 273-4)).